The following is a 130-amino-acid chain: MARDVEAQLNYIESLISSVDAQIDAINKMVLEVQTTIQILSSDELRQSKERLISVGSGIFANGNLDLDSDLIVPIGSGVYIAEKRSETIERLKANIENLKESIQKLMDQRRTLVDQYNTVYTTEATRNIK.

Belongs to the prefoldin subunit alpha family. Heterohexamer of two alpha and four beta subunits.

It localises to the cytoplasm. Molecular chaperone capable of stabilizing a range of proteins. Seems to fulfill an ATP-independent, HSP70-like function in archaeal de novo protein folding. The polypeptide is Prefoldin subunit alpha (Thermoplasma volcanium (strain ATCC 51530 / DSM 4299 / JCM 9571 / NBRC 15438 / GSS1)).